Consider the following 97-residue polypeptide: Putative membrane protein insertion efficiency factor (97 aa).

The protein belongs to the UPF0161 family.

The protein resides in the cell inner membrane. In terms of biological role, could be involved in insertion of integral membrane proteins into the membrane. The sequence is that of Putative membrane protein insertion efficiency factor from Chlamydia muridarum (strain MoPn / Nigg).